A 307-amino-acid polypeptide reads, in one-letter code: Nuclear polyadenylated RNA-binding protein nab2 (307 aa).

Residues 102–135 (STDKSQQSFSVPETSIQPQSSQTPNITSLREEKE) form a disordered region. Positions 105 to 129 (KSQQSFSVPETSIQPQSSQTPNITS) are enriched in polar residues. 3 consecutive C3H1-type zinc fingers follow at residues 178-202 (TQEV…HPTP), 217-232 (CASG…VKGH), and 254-268 (CKYK…RFIH). The segment at 274-307 (NMTWRPPSKTEETSLSERSFAVNESEEQLHVPSV) is disordered.

This sequence belongs to the ZC3H14 family.

The protein resides in the nucleus. Its function is as follows. RNA-binding protein involved in RNA processing. Acts as a regulator of mRNA stability: binds to mRNAs and pre-mRNAs, preventing their degradation. Involved in the biogenesis of circular RNAs (circRNAs) which are produced by back-splicing circularization of pre-mRNAs. The chain is Nuclear polyadenylated RNA-binding protein nab2 from Schizosaccharomyces pombe (strain 972 / ATCC 24843) (Fission yeast).